The chain runs to 202 residues: Large ribosomal subunit protein bL25 (202 aa).

This sequence belongs to the bacterial ribosomal protein bL25 family. CTC subfamily. Part of the 50S ribosomal subunit; part of the 5S rRNA/L5/L18/L25 subcomplex. Contacts the 5S rRNA. Binds to the 5S rRNA independently of L5 and L18.

Its function is as follows. This is one of the proteins that binds to the 5S RNA in the ribosome where it forms part of the central protuberance. The polypeptide is Large ribosomal subunit protein bL25 (Corynebacterium efficiens (strain DSM 44549 / YS-314 / AJ 12310 / JCM 11189 / NBRC 100395)).